Reading from the N-terminus, the 509-residue chain is Histidine ammonia-lyase (509 aa).

The segment at residues 142–144 (ASG) is a cross-link (5-imidazolinone (Ala-Gly)). Position 143 is a 2,3-didehydroalanine (Ser) (Ser-143).

Belongs to the PAL/histidase family. In terms of processing, contains an active site 4-methylidene-imidazol-5-one (MIO), which is formed autocatalytically by cyclization and dehydration of residues Ala-Ser-Gly.

Its subcellular location is the cytoplasm. The catalysed reaction is L-histidine = trans-urocanate + NH4(+). The protein operates within amino-acid degradation; L-histidine degradation into L-glutamate; N-formimidoyl-L-glutamate from L-histidine: step 1/3. The polypeptide is Histidine ammonia-lyase (Pseudomonas aeruginosa (strain UCBPP-PA14)).